A 203-amino-acid polypeptide reads, in one-letter code: Glycerol-3-phosphate acyltransferase (203 aa).

4 consecutive transmembrane segments (helical) span residues 6-26 (LTLL…AVLV), 82-102 (AISL…PIFF), 118-138 (APIG…LVLI), and 141-161 (YSSL…WWLD).

The protein belongs to the PlsY family. As to quaternary structure, probably interacts with PlsX.

The protein resides in the cell inner membrane. The catalysed reaction is an acyl phosphate + sn-glycerol 3-phosphate = a 1-acyl-sn-glycero-3-phosphate + phosphate. The protein operates within lipid metabolism; phospholipid metabolism. In terms of biological role, catalyzes the transfer of an acyl group from acyl-phosphate (acyl-PO(4)) to glycerol-3-phosphate (G3P) to form lysophosphatidic acid (LPA). This enzyme utilizes acyl-phosphate as fatty acyl donor, but not acyl-CoA or acyl-ACP. This Shewanella sp. (strain ANA-3) protein is Glycerol-3-phosphate acyltransferase.